An 844-amino-acid polypeptide reads, in one-letter code: NADPH-Fe(3+) oxidoreductase subunit alpha (844 aa).

Positions 1–78 (MVSLTIDGKD…GIKVTTQSEK (78 aa)) constitute a 2Fe-2S ferredoxin-type domain. The [2Fe-2S] cluster site is built by C34, C45, C48, and C62. The region spanning 78-117 (KLSRIRQKIMELMLVNHPLDCPVCDAGGECDLQNACYGLG) is the 4Fe-4S His(Cys)3-ligated-type domain. Positions 94, 98, 101, 107, 146, 149, 152, 186, 189, 192, 196, 222, 225, 229, and 256 each coordinate [4Fe-4S] cluster. 4Fe-4S ferredoxin-type domains are found at residues 137–168 (PLIE…IRVV) and 177–206 (DTVD…SKPF). The 56-residue stretch at 215 to 270 (FTTTPSVCPFCATGCQIEYHSRNGRVERVTSDDSTYNSGNLCINGRFGYSYINSPD) folds into the 4Fe-4S Mo/W bis-MGD-type domain.

As to quaternary structure, heterotetramer with 2 beta subunits. [4Fe-4S] cluster is required as a cofactor.

Its subcellular location is the cell inner membrane. Its activity is regulated as follows. Not regulated by FAD or FMN. The SfrAB enzymatic complex is probably involved in acetate metabolism and does not participate directly in the reduction of Fe(3+) chelates. May serve as a major route for NADP regeneration. In Geobacter sulfurreducens (strain DL-1 / KN400), this protein is NADPH-Fe(3+) oxidoreductase subunit alpha (sfrA).